Consider the following 199-residue polypeptide: Ribonuclease HII (199 aa).

One can recognise an RNase H type-2 domain in the interval 11–199 (SRVAGVDEVG…RRSFLRRLLG (189 aa)). Residues D17, E18, and D113 each coordinate a divalent metal cation.

It belongs to the RNase HII family. It depends on Mn(2+) as a cofactor. Requires Mg(2+) as cofactor.

It is found in the cytoplasm. It catalyses the reaction Endonucleolytic cleavage to 5'-phosphomonoester.. Endonuclease that specifically degrades the RNA of RNA-DNA hybrids. This chain is Ribonuclease HII, found in Synechococcus sp. (strain CC9902).